Here is a 443-residue protein sequence, read N- to C-terminus: Xaa-Pro dipeptidase (443 aa).

Residues Asp-246, Asp-257, His-339, Glu-384, and Glu-423 each coordinate Mn(2+).

The protein belongs to the peptidase M24B family. Bacterial-type prolidase subfamily. Requires Mn(2+) as cofactor.

The catalysed reaction is Xaa-L-Pro dipeptide + H2O = an L-alpha-amino acid + L-proline. Splits dipeptides with a prolyl residue in the C-terminal position. This is Xaa-Pro dipeptidase from Cronobacter sakazakii (strain ATCC BAA-894) (Enterobacter sakazakii).